The primary structure comprises 138 residues: Small ribosomal subunit protein uS11c (138 aa).

The disordered stretch occupies residues 1–22 (MAKSIPKTGSRKNVRIGSRNQT).

It belongs to the universal ribosomal protein uS11 family. As to quaternary structure, part of the 30S ribosomal subunit.

The protein resides in the plastid. Its subcellular location is the chloroplast. This is Small ribosomal subunit protein uS11c from Phaseolus angularis (Azuki bean).